The primary structure comprises 100 residues: NADH-quinone oxidoreductase subunit K (100 aa).

3 consecutive transmembrane segments (helical) span residues 4 to 24, 29 to 49, and 60 to 80; these read LSHAFSLSIILFILGLIAIIV, LFILLGLEIMINAAASAFVIV, and IMYILVITLSASESAVSLALL.

This sequence belongs to the complex I subunit 4L family. In terms of assembly, NDH-1 is composed of 13 different subunits. Subunits NuoA, H, J, K, L, M, N constitute the membrane sector of the complex.

It localises to the cell inner membrane. It carries out the reaction a quinone + NADH + 5 H(+)(in) = a quinol + NAD(+) + 4 H(+)(out). Functionally, NDH-1 shuttles electrons from NADH, via FMN and iron-sulfur (Fe-S) centers, to quinones in the respiratory chain. The immediate electron acceptor for the enzyme in this species is believed to be ubiquinone. Couples the redox reaction to proton translocation (for every two electrons transferred, four hydrogen ions are translocated across the cytoplasmic membrane), and thus conserves the redox energy in a proton gradient. The polypeptide is NADH-quinone oxidoreductase subunit K (Blochmanniella pennsylvanica (strain BPEN)).